Here is a 444-residue protein sequence, read N- to C-terminus: 3-phosphoshikimate 1-carboxyvinyltransferase (444 aa).

The 3-phosphoshikimate site is built by lysine 29, serine 30, and arginine 34. Lysine 29 contributes to the phosphoenolpyruvate binding site. Glycine 102 and arginine 131 together coordinate phosphoenolpyruvate. Serine 176, glutamine 178, aspartate 326, and lysine 353 together coordinate 3-phosphoshikimate. Glutamine 178 provides a ligand contact to phosphoenolpyruvate. Aspartate 326 acts as the Proton acceptor in catalysis. Phosphoenolpyruvate contacts are provided by arginine 357 and arginine 399.

The protein belongs to the EPSP synthase family. Monomer.

The protein resides in the cytoplasm. It catalyses the reaction 3-phosphoshikimate + phosphoenolpyruvate = 5-O-(1-carboxyvinyl)-3-phosphoshikimate + phosphate. It participates in metabolic intermediate biosynthesis; chorismate biosynthesis; chorismate from D-erythrose 4-phosphate and phosphoenolpyruvate: step 6/7. In terms of biological role, catalyzes the transfer of the enolpyruvyl moiety of phosphoenolpyruvate (PEP) to the 5-hydroxyl of shikimate-3-phosphate (S3P) to produce enolpyruvyl shikimate-3-phosphate and inorganic phosphate. In Synechococcus sp. (strain JA-3-3Ab) (Cyanobacteria bacterium Yellowstone A-Prime), this protein is 3-phosphoshikimate 1-carboxyvinyltransferase.